A 237-amino-acid polypeptide reads, in one-letter code: MIREYFRLHQTIATIVARSQEHIEIAKSAIIDSRTQLEEFIAFDPLFQLTLVPYDLPVDNAPPIVKRMCHASSLFHVGPMAAVAGAIAAFAVEAMVEAGADYAVVDNGGDIAIFSDEPLLVGIYAGSSPIKNLALEIHPTGGILGVCSSSGTIGPSISFGCADVATVISRDPAIADAGATALGNAVTPDASLKECFSVVDRDEVIGALIIRGDEMAVWGEVPPIRRARVKYDLITKG.

It belongs to the UPF0280 family.

This Methanothrix thermoacetophila (strain DSM 6194 / JCM 14653 / NBRC 101360 / PT) (Methanosaeta thermophila) protein is UPF0280 protein Mthe_1297.